The sequence spans 332 residues: dTDP-3,4-didehydro-2,6-dideoxy-alpha-D-glucose 3-reductase (332 aa).

Residue 12 to 18 (CASFAWR) participates in NADP(+) binding. Arginine 19 is a substrate binding site. NADP(+) contacts are provided by residues 37 to 38 (SR), tyrosine 58, leucine 74, and histidine 79. Lysine 97 (proton donor) is an active-site residue. Residues arginine 165 and aspartate 177 each contribute to the NADP(+) site. Residues tyrosine 235 and threonine 255 each contribute to the substrate site.

The protein belongs to the Gfo/Idh/MocA family. As to quaternary structure, monomer.

It catalyses the reaction dTDP-4-dehydro-2,6-dideoxy-alpha-D-glucose + NADP(+) = dTDP-3,4-didehydro-2,6-dideoxy-alpha-D-glucose + NADPH + H(+). Its function is as follows. Involved in the biosynthesis of forosamine ((4-dimethylamino)-2,3,4,6-tetradeoxy-alpha-D-threo-hexopyranose), a highly deoxygenated sugar component of several bioactive natural products such as the insecticidal spinosyns A and D. Catalyzes the reduction of the C-3 keto moiety of dTDP-3,4-diketo-2,6-dideoxy-alpha-D-glucose to yield dTDP-4-keto-2,6-dideoxy-alpha-D-glucose. NADPH is the better reductant, however NADH can also be used. The protein is dTDP-3,4-didehydro-2,6-dideoxy-alpha-D-glucose 3-reductase of Saccharopolyspora spinosa.